Consider the following 407-residue polypeptide: Phosphopentomutase (407 aa).

Mn(2+)-binding residues include aspartate 11, aspartate 305, histidine 310, aspartate 346, histidine 347, and histidine 358.

It belongs to the phosphopentomutase family. Requires Mn(2+) as cofactor.

The protein localises to the cytoplasm. The catalysed reaction is 2-deoxy-alpha-D-ribose 1-phosphate = 2-deoxy-D-ribose 5-phosphate. The enzyme catalyses alpha-D-ribose 1-phosphate = D-ribose 5-phosphate. The protein operates within carbohydrate degradation; 2-deoxy-D-ribose 1-phosphate degradation; D-glyceraldehyde 3-phosphate and acetaldehyde from 2-deoxy-alpha-D-ribose 1-phosphate: step 1/2. Its function is as follows. Isomerase that catalyzes the conversion of deoxy-ribose 1-phosphate (dRib-1-P) and ribose 1-phosphate (Rib-1-P) to deoxy-ribose 5-phosphate (dRib-5-P) and ribose 5-phosphate (Rib-5-P), respectively. In Legionella pneumophila subsp. pneumophila (strain Philadelphia 1 / ATCC 33152 / DSM 7513), this protein is Phosphopentomutase.